An 805-amino-acid polypeptide reads, in one-letter code: Ubiquitin carboxyl-terminal hydrolase 10-B (805 aa).

Disordered regions lie at residues 136–173 and 284–305; these read AIPD…YLEG and DTTE…EDTV. Polar residues-rich tracts occupy residues 143-153 and 284-298; these read NADSDGTSGTG and DTTE…QTLE. The 381-residue stretch at 422 to 802 folds into the USP domain; that stretch reads RGLINKGNWC…TAYLLYYRRV (381 aa). Cys-431 acts as the Nucleophile in catalysis. Positions 573–600 are disordered; it reads EEVNKEEQEGSDEEWEQVGPRNKSSVTR. Residue His-756 is the Proton acceptor of the active site.

Belongs to the peptidase C19 family. USP10 subfamily.

The protein resides in the cytoplasm. The protein localises to the nucleus. The enzyme catalyses Thiol-dependent hydrolysis of ester, thioester, amide, peptide and isopeptide bonds formed by the C-terminal Gly of ubiquitin (a 76-residue protein attached to proteins as an intracellular targeting signal).. In terms of biological role, hydrolase that can remove conjugated ubiquitin from target proteins such as p53/tp53, rps2/us5, rps3/us3, rps10/eS10, becn1, snx3 and cftr. Acts as an essential regulator of p53/tp53 stability: in unstressed cells, specifically deubiquitinates p53/tp53 in the cytoplasm, leading to counteracts MDM2 action and stabilize p53/tp53. Following DNA damage, translocates to the nucleus and deubiquitinates p53/tp53, leading to regulate the p53/TP53-dependent DNA damage response. Component of a regulatory loop that controls autophagy and p53/tp53 levels. Plays a key role in 40S ribosome subunit recycling when a ribosome has stalled during translation: acts both by inhibiting formation of stress granules, which store stalled translation pre-initiation complexes, and mediating deubiquitination of 40S ribosome subunits. Deubiquitinates cftr in early endosomes, enhancing its endocytic recycling. The sequence is that of Ubiquitin carboxyl-terminal hydrolase 10-B (usp10-b) from Xenopus laevis (African clawed frog).